A 172-amino-acid polypeptide reads, in one-letter code: Ribosome maturation factor RimM (172 aa).

Residues 95–168 (AEGEFYYHQI…RVDVEIMEGL (74 aa)) form the PRC barrel domain.

The protein belongs to the RimM family. As to quaternary structure, binds ribosomal protein uS19.

The protein localises to the cytoplasm. Its function is as follows. An accessory protein needed during the final step in the assembly of 30S ribosomal subunit, possibly for assembly of the head region. Essential for efficient processing of 16S rRNA. May be needed both before and after RbfA during the maturation of 16S rRNA. It has affinity for free ribosomal 30S subunits but not for 70S ribosomes. In Streptococcus equi subsp. zooepidemicus (strain H70), this protein is Ribosome maturation factor RimM.